Here is a 1367-residue protein sequence, read N- to C-terminus: DNA polymerase III PolC-type (1367 aa).

The 156-residue stretch at 358 to 513 (FVVLDFETTG…DDARVTAQVF (156 aa)) folds into the Exonuclease domain.

Belongs to the DNA polymerase type-C family. PolC subfamily.

It is found in the cytoplasm. The enzyme catalyses DNA(n) + a 2'-deoxyribonucleoside 5'-triphosphate = DNA(n+1) + diphosphate. Its function is as follows. Required for replicative DNA synthesis. This DNA polymerase also exhibits 3' to 5' exonuclease activity. This Thermotoga maritima (strain ATCC 43589 / DSM 3109 / JCM 10099 / NBRC 100826 / MSB8) protein is DNA polymerase III PolC-type.